Here is a 445-residue protein sequence, read N- to C-terminus: Phosphoglucosamine mutase (445 aa).

The Phosphoserine intermediate role is filled by serine 102. Residues serine 102, aspartate 241, aspartate 243, and aspartate 245 each contribute to the Mg(2+) site. Serine 102 is subject to Phosphoserine.

Belongs to the phosphohexose mutase family. It depends on Mg(2+) as a cofactor. Activated by phosphorylation.

It carries out the reaction alpha-D-glucosamine 1-phosphate = D-glucosamine 6-phosphate. Its function is as follows. Catalyzes the conversion of glucosamine-6-phosphate to glucosamine-1-phosphate. In Shigella boydii serotype 4 (strain Sb227), this protein is Phosphoglucosamine mutase.